The following is a 133-amino-acid chain: MVMNVRVLTPTRVICSTTADEVILPGLTGLVGILDGHAALITALDTGLLRIKLNEKWTPIILCGGLAEIDRNRVTVLVNDVEELVAVELNEATTELEKATLAVENAETSKARLDASIELKKAVARLEGMNYLS.

Belongs to the ATPase epsilon chain family. In terms of assembly, F-type ATPases have 2 components, CF(1) - the catalytic core - and CF(0) - the membrane proton channel. CF(1) has five subunits: alpha(3), beta(3), gamma(1), delta(1), epsilon(1). CF(0) has three main subunits: a, b and c.

It is found in the plastid. The protein localises to the chloroplast thylakoid membrane. In terms of biological role, produces ATP from ADP in the presence of a proton gradient across the membrane. The polypeptide is ATP synthase epsilon chain, chloroplastic (Trieres chinensis (Marine centric diatom)).